The following is a 70-amino-acid chain: DNA-directed RNA polymerase subunit omega (70 aa).

It belongs to the RNA polymerase subunit omega family. In terms of assembly, the RNAP catalytic core consists of 2 alpha, 1 beta, 1 beta' and 1 omega subunit. When a sigma factor is associated with the core the holoenzyme is formed, which can initiate transcription.

The enzyme catalyses RNA(n) + a ribonucleoside 5'-triphosphate = RNA(n+1) + diphosphate. Promotes RNA polymerase assembly. Latches the N- and C-terminal regions of the beta' subunit thereby facilitating its interaction with the beta and alpha subunits. The polypeptide is DNA-directed RNA polymerase subunit omega (Bacillus cereus (strain B4264)).